A 2005-amino-acid polypeptide reads, in one-letter code: Sodium channel protein type 2 subunit alpha (2005 aa).

Over Met1–Ser129 the chain is Cytoplasmic. At Ser4 the chain carries Phosphoserine. The interval Arg28–Ser61 is disordered. Lys38 is covalently cross-linked (Glycyl lysine isopeptide (Lys-Gly) (interchain with G-Cter in SUMO1)). Residues Ile111–Gln456 form an I repeat. Residues Leu130–Met148 traverse the membrane as a helical segment. Topologically, residues Ser149–Thr155 are extracellular. A helical membrane pass occupies residues Lys156–Ala176. Topologically, residues Arg177–Pro190 are cytoplasmic. A helical membrane pass occupies residues Trp191–Val208. Residues Asn209 to Ser214 are Extracellular-facing. Asn212 carries an N-linked (GlcNAc...) asparagine glycan. A helical membrane pass occupies residues Ala215 to Ile231. The Cytoplasmic portion of the chain corresponds to Pro232 to Asp250. A helical transmembrane segment spans residues Val251–Phe270. Residues Met271–Thr369 lie on the Extracellular side of the membrane. Cys278 and Cys338 form a disulfide bridge. Residues Asn285, Asn291, Asn297, Asn303, Asn308, and Asn340 are each glycosylated (N-linked (GlcNAc...) asparagine). Residues Phe370–Leu394 constitute an intramembrane region (pore-forming). Over Arg395–Tyr401 the chain is Extracellular. Residues Met402–Ala422 traverse the membrane as a helical segment. The Cytoplasmic portion of the chain corresponds to Val423–Pro759. A phosphoserine mark is found at Ser468, Ser471, Ser484, Ser526, Ser528, Ser531, Ser553, Ser554, and Ser558. Residues Ser494–Glu529 form a disordered region. Residues Lys511 to Glu529 are compositionally biased toward basic and acidic residues. Ser554 is subject to Phosphoserine; by PKC; in vitro. Residues Ser573 and Ser576 each carry the phosphoserine; by PKC; in vitro modification. Phosphoserine occurs at positions 589, 610, 623, 687, 688, and 721. The tract at residues Asn591–Gly634 is disordered. Over residues Asp596–Ser610 the composition is skewed to basic and acidic residues. An II repeat occupies Cys741 to Gly1013. The helical transmembrane segment at Phe760–Met778 threads the bilayer. Residues Glu779–Ser789 lie on the Extracellular side of the membrane. A helical membrane pass occupies residues Val790 to Lys809. Residues Ile810–Trp823 are Cytoplasmic-facing. A helical membrane pass occupies residues Asn824 to Val843. The Extracellular portion of the chain corresponds to Glu844 to Gly845. Residues Leu846–Ser863 traverse the membrane as a helical segment. At Trp864–Gly879 the chain is on the cytoplasmic side. The helical transmembrane segment at Ala880–Val898 threads the bilayer. The Extracellular segment spans residues Gly899–His927. A disulfide bridge links Cys912 with Cys918. A binds SCN2B region spans residues Asp917–Cys918. Positions Phe928–Trp948 form an intramembrane region, pore-forming. Residues Asp949–Thr961 are Extracellular-facing. A disulfide bridge links Cys950 with Cys959. Residues Val962–Leu982 traverse the membrane as a helical segment. Residues Leu983–Trp1209 are Cytoplasmic-facing. Positions Glu1120–Glu1166 are disordered. The segment covering Glu1155 to Glu1166 has biased composition (acidic residues). An III repeat occupies Lys1190 to Leu1504. The chain crosses the membrane as a helical span at residues Phe1210–Phe1227. Over Glu1228–Thr1240 the chain is Extracellular. The helical transmembrane segment at Met1241 to Leu1259 threads the bilayer. Residues Lys1260–Ala1273 lie on the Cytoplasmic side of the membrane. A helical membrane pass occupies residues Trp1274 to Asn1292. Residues Ala1293–Gly1300 lie on the Extracellular side of the membrane. Residues Ala1301–Arg1319 traverse the membrane as a helical segment. Residues Phe1320 to Ser1336 lie on the Cytoplasmic side of the membrane. A helical transmembrane segment spans residues Ile1337–Val1356. The Extracellular portion of the chain corresponds to Asn1357 to Val1408. Cys1366 and Cys1386 are joined by a disulfide. Asn1368, Asn1382, and Asn1393 each carry an N-linked (GlcNAc...) asparagine glycan. The segment at residues Gly1409 to Ala1430 is an intramembrane region (pore-forming). The Extracellular segment spans residues Ala1431–Leu1447. Residues Tyr1448–Ile1469 form a helical membrane-spanning segment. The Cytoplasmic portion of the chain corresponds to Gly1470–Val1532. At Ser1506 the chain carries Phosphoserine; by PKC. The IV repeat unit spans residues Ile1513–Gln1811. A helical membrane pass occupies residues Phe1533–Val1550. Over Glu1551–Asn1561 the chain is Extracellular. Residues Ile1562–Leu1580 form a helical membrane-spanning segment. Residues Lys1581–Ile1592 are Cytoplasmic-facing. A helical transmembrane segment spans residues Gly1593 to Phe1610. Residues Leu1611 to Thr1623 are Extracellular-facing. The helical transmembrane segment at Leu1624–Ile1640 threads the bilayer. Topologically, residues Lys1641–Ala1659 are cytoplasmic. The helical transmembrane segment at Leu1660–Phe1677 threads the bilayer. Topologically, residues Gly1678 to Thr1699 are extracellular. Positions Phe1700–Pro1722 form an intramembrane region, pore-forming. Residues Ile1723–Gly1752 lie on the Extracellular side of the membrane. The cysteines at positions 1731 and 1746 are disulfide-linked. A helical transmembrane segment spans residues Ile1753–Ile1775. At Leu1776 to Lys2005 the chain is on the cytoplasmic side. In terms of domain architecture, IQ spans Glu1905–Lys1934. Residue Ser1930 is modified to Phosphoserine. Basic and acidic residues predominate over residues Lys1933 to Asp1964. Positions Lys1933–Lys2005 are disordered. Phosphothreonine occurs at positions 1943, 1963, and 1966. Ser1971 carries the post-translational modification Phosphoserine. Basic and acidic residues predominate over residues Thr1979–Lys2005.

Belongs to the sodium channel (TC 1.A.1.10) family. Nav1.2/SCN2A subfamily. Heterooligomer of a large alpha subunit and a smaller beta subunit. Heterooligomer with SCN2B or SCN4B; disulfide-linked. Heterooligomer with SCN1B or SCN3B; non-covalently linked. Interacts with NEDD4L. Interacts with CALM. Interacts with TMEM233. Interacts with the conotoxin GVIIJ. Interacts with the scorpion toxin BMK M1. In terms of processing, may be ubiquitinated by NEDD4L; which would promote its endocytosis. Post-translationally, phosphorylation at Ser-1506 by PKC in a highly conserved cytoplasmic loop slows inactivation of the sodium channel and reduces peak sodium currents. Sumoylated at Lys-38. Sumoylation is induced by hypoxia, increases voltage-gated sodium current and mediates the early response to acute hypoxia in neurons. Sumoylated SCN2A is located at the cell membrane. In terms of tissue distribution, expressed in brain (at protein level). Expressed in cerebellar granule neurons (at protein level).

It localises to the cell membrane. The catalysed reaction is Na(+)(in) = Na(+)(out). Mediates the voltage-dependent sodium ion permeability of excitable membranes. Assuming opened or closed conformations in response to the voltage difference across the membrane, the protein forms a sodium-selective channel through which Na(+) ions may pass in accordance with their electrochemical gradient. Implicated in the regulation of hippocampal replay occurring within sharp wave ripples (SPW-R) important for memory. This chain is Sodium channel protein type 2 subunit alpha, found in Rattus norvegicus (Rat).